Here is a 189-residue protein sequence, read N- to C-terminus: Apolipoprotein D (189 aa).

The signal sequence occupies residues 1-20 (MATMLLLLATLAGLFTTTEG). Position 21 is a pyrrolidone carboxylic acid (Gln-21). 2 disulfides stabilise this stretch: Cys-28–Cys-134 and Cys-61–Cys-185. N-linked (GlcNAc...) asparagine glycans are attached at residues Asn-65 and Asn-98.

Belongs to the calycin superfamily. Lipocalin family. In terms of assembly, homodimer. Expressed in liver, kidney, bladder, adrenal, cerebrum, duodenum, testis, lung, spleen, pancreas, heart and skin.

It is found in the secreted. Functionally, APOD occurs in the macromolecular complex with lecithin-transport and binding of bilin. Appears to be able to transport a variety of ligands in a number of different contexts. This Rattus norvegicus (Rat) protein is Apolipoprotein D (Apod).